We begin with the raw amino-acid sequence, 143 residues long: Nucleoside diphosphate kinase (143 aa).

ATP contacts are provided by K11, F59, R87, T93, R104, and N114. H117 (pros-phosphohistidine intermediate) is an active-site residue.

The protein belongs to the NDK family. As to quaternary structure, homotetramer. Mg(2+) serves as cofactor.

It localises to the cytoplasm. The enzyme catalyses a 2'-deoxyribonucleoside 5'-diphosphate + ATP = a 2'-deoxyribonucleoside 5'-triphosphate + ADP. It carries out the reaction a ribonucleoside 5'-diphosphate + ATP = a ribonucleoside 5'-triphosphate + ADP. In terms of biological role, major role in the synthesis of nucleoside triphosphates other than ATP. The ATP gamma phosphate is transferred to the NDP beta phosphate via a ping-pong mechanism, using a phosphorylated active-site intermediate. The protein is Nucleoside diphosphate kinase of Escherichia coli O81 (strain ED1a).